The chain runs to 438 residues: Cysteine--tRNA ligase (438 aa).

Cys-28 contacts Zn(2+). A 'HIGH' region motif is present at residues 30 to 40 (PTVYNHLHLGN). Zn(2+) contacts are provided by Cys-207, His-232, and Glu-236. Positions 264 to 268 (KMSKS) match the 'KMSKS' region motif. Lys-267 contacts ATP.

The protein belongs to the class-I aminoacyl-tRNA synthetase family. Monomer. The cofactor is Zn(2+).

It is found in the cytoplasm. The enzyme catalyses tRNA(Cys) + L-cysteine + ATP = L-cysteinyl-tRNA(Cys) + AMP + diphosphate. This chain is Cysteine--tRNA ligase, found in Onion yellows phytoplasma (strain OY-M).